A 572-amino-acid polypeptide reads, in one-letter code: MGSSNLELIFDSVGHFGRYQIFLYFICAFQNISCGIHYLASVFLSVSPQHTCRPPGNVSQVLFQDLSTWQLEDIWTQFSVGREDRILVQLQDGAIWELTSCQRFRRDDQSSLDYEYSGQKSSFPCLDGYIYDRSKWLSTVVTQWDLVCNREWFGRLIQPTFMFGVLLGAVIFGYLSDRAGRRLVLWASSTGVFLFGIAAAFTFDYYSFIVARFLLAISGSGYLVVVFVYVTEFVGMKSRTWASIHLHSFFAFGTMVVALTGYFVRTWWIYQIVLSSVTVPFVLCCWMLPETPFWLISGGKYEEAQKVIDTMAKWNRTRPCKLSEILSLDHDGSAGNKPSQVEKHTLSELFYDWSIGTRTLILWLIWFTGCLGFYTFSLNSVHLGGSEYLNLFLMGVVEIPAYVLVCLGMDRVGRRNILIFSLLSSAVTSGVIMVIPKDYHVWLVVASMAGKFFIGAAFGLIYLYTAELYPTIVRSLAVGSGSTVGRVGSIVAPLCIYLSSVWIFMPQLLVGTLALVSGVLTFLLPETLRRPLTTTWEETEKESSSGKLLSTTSNTVLENVTVENSEDSSLNK.

The chain crosses the membrane as a helical span at residues 21–41 (IFLYFICAFQNISCGIHYLAS). Asn-57 carries N-linked (GlcNAc...) asparagine glycosylation. Transmembrane regions (helical) follow at residues 156-176 (LIQP…GYLS), 183-203 (LVLW…AFTF), 208-228 (FIVA…VVFV), 244-264 (IHLH…GYFV), and 268-288 (WIYQ…CWML). The N-linked (GlcNAc...) asparagine glycan is linked to Asn-315. Helical transmembrane passes span 359–379 (TLIL…FSLN), 389–409 (LNLF…CLGM), 416–436 (NILI…MVIP), 441–461 (VWLV…FGLI), 476–496 (LAVG…PLCI), and 503–523 (IFMP…LTFL). Asn-559 is a glycosylation site (N-linked (GlcNAc...) asparagine).

It belongs to the major facilitator (TC 2.A.1) superfamily. Organic cation transporter (TC 2.A.1.19) family.

Its subcellular location is the cell membrane. The enzyme catalyses (R)-carnitine(in) = (R)-carnitine(out). It catalyses the reaction spermidine(in) = spermidine(out). Functionally, facilitative organic cation transporter that mediates the transport of carnitine as well as the polyamine spermidine. Mediates the partially Na(+)-dependent bidirectional transport of carnitine. May mediate L-carnitine secretion from testis epididymal epithelium into the lumen which is involved in the maturation of spermatozoa. The protein is Solute carrier family 22 member 16 (SLC22A16) of Bos taurus (Bovine).